Reading from the N-terminus, the 158-residue chain is uncharacterized protein (158 aa).

An N-terminal signal peptide occupies residues 1-19; the sequence is MQKLLLAVLFFSLLAIATA. Residues 82–158 form a disordered region; that stretch reads ANPKAEAEPG…VYENDDENEE (77 aa). Residues 84–107 show a composition bias toward basic and acidic residues; it reads PKAEAEPGSLDKEAGTKGEKEKNG. Residues 141 to 158 show a composition bias toward acidic residues; sequence DDDDDHDDVYENDDENEE.

Prismatic layer of shell (at protein level). Expressed primarily in the mantle with highest level in the mantle edge and lower level in the mantle pallium.

The protein resides in the secreted. This is an uncharacterized protein from Pinctada maxima (Silver-lipped pearl oyster).